The sequence spans 388 residues: Chaperone protein DnaJ (388 aa).

The region spanning 5–70 (DYYEVLGVAR…QKRAAYDRFG (66 aa)) is the J domain. A CR-type zinc finger spans residues 141-219 (GKTETIRLPT…CGGAGRVTRE (79 aa)). Zn(2+) contacts are provided by C154, C157, C171, C174, C193, C196, C207, and C210. CXXCXGXG motif repeat units follow at residues 154–161 (CEVCAGSG), 171–178 (CPTCGGYG), 193–200 (CPNCHGRG), and 207–214 (CTACGGAG).

The protein belongs to the DnaJ family. Homodimer. Zn(2+) is required as a cofactor.

It localises to the cytoplasm. Participates actively in the response to hyperosmotic and heat shock by preventing the aggregation of stress-denatured proteins and by disaggregating proteins, also in an autonomous, DnaK-independent fashion. Unfolded proteins bind initially to DnaJ; upon interaction with the DnaJ-bound protein, DnaK hydrolyzes its bound ATP, resulting in the formation of a stable complex. GrpE releases ADP from DnaK; ATP binding to DnaK triggers the release of the substrate protein, thus completing the reaction cycle. Several rounds of ATP-dependent interactions between DnaJ, DnaK and GrpE are required for fully efficient folding. Also involved, together with DnaK and GrpE, in the DNA replication of plasmids through activation of initiation proteins. The polypeptide is Chaperone protein DnaJ (Methylobacterium nodulans (strain LMG 21967 / CNCM I-2342 / ORS 2060)).